The primary structure comprises 232 residues: Expansin-YoaJ (232 aa).

Positions 1-25 (MKKIMSAFVGMVLLTIFCFSPQASA) are cleaved as a signal peptide. The Expansin-like EG45 domain occupies 58–127 (ITAINPADLN…MKDGKINIKW (70 aa)).

The protein localises to the secreted. The protein resides in the cell wall. Functionally, may promote colonization of plant roots. May cause loosening and extension of plant cell walls by disrupting non-covalent bonding between cellulose microfibrils and matrix glucans. Has very low expansin activity (in vitro). No enzymatic activity has been found. Binds to peptidoglycan and to plant cell walls. In Bacillus subtilis (strain 168), this protein is Expansin-YoaJ (yoaJ).